The sequence spans 1368 residues: DNA-directed RNA polymerase subunit beta (1368 aa).

Belongs to the RNA polymerase beta chain family. As to quaternary structure, the RNAP catalytic core consists of 2 alpha, 1 beta, 1 beta' and 1 omega subunit. When a sigma factor is associated with the core the holoenzyme is formed, which can initiate transcription.

It carries out the reaction RNA(n) + a ribonucleoside 5'-triphosphate = RNA(n+1) + diphosphate. Functionally, DNA-dependent RNA polymerase catalyzes the transcription of DNA into RNA using the four ribonucleoside triphosphates as substrates. This Paraburkholderia xenovorans (strain LB400) protein is DNA-directed RNA polymerase subunit beta.